The chain runs to 89 residues: uncharacterized protein (89 aa).

The protein to M.jannaschii MJ1436.

This is an uncharacterized protein from Methanothermobacter thermautotrophicus (strain ATCC 29096 / DSM 1053 / JCM 10044 / NBRC 100330 / Delta H) (Methanobacterium thermoautotrophicum).